A 257-amino-acid chain; its full sequence is NAD-capped RNA hydrolase NudC (257 aa).

2 residues coordinate substrate: K25 and R69. The Zn(2+) site is built by C98 and C101. E111 provides a ligand contact to substrate. The Zn(2+) site is built by C116 and C119. Y124 contacts substrate. Residues 125-248 (PQIAPCIIVA…TVARRLIEDT (124 aa)) form the Nudix hydrolase domain. A divalent metal cation contacts are provided by A158, E174, and E178. The Nudix box motif lies at 159 to 180 (GFVEVGETLEQAVAREVMEESG). 192 to 199 (QPWPFPQS) contributes to the substrate binding site. E219 serves as a coordination point for a divalent metal cation. A241 contributes to the substrate binding site.

This sequence belongs to the Nudix hydrolase family. NudC subfamily. In terms of assembly, homodimer. It depends on Mg(2+) as a cofactor. Mn(2+) serves as cofactor. The cofactor is Zn(2+).

The enzyme catalyses a 5'-end NAD(+)-phospho-ribonucleoside in mRNA + H2O = a 5'-end phospho-adenosine-phospho-ribonucleoside in mRNA + beta-nicotinamide D-ribonucleotide + 2 H(+). It catalyses the reaction NAD(+) + H2O = beta-nicotinamide D-ribonucleotide + AMP + 2 H(+). It carries out the reaction NADH + H2O = reduced beta-nicotinamide D-ribonucleotide + AMP + 2 H(+). Functionally, mRNA decapping enzyme that specifically removes the nicotinamide adenine dinucleotide (NAD) cap from a subset of mRNAs by hydrolyzing the diphosphate linkage to produce nicotinamide mononucleotide (NMN) and 5' monophosphate mRNA. The NAD-cap is present at the 5'-end of some mRNAs and stabilizes RNA against 5'-processing. Has preference for mRNAs with a 5'-end purine. Catalyzes the hydrolysis of a broad range of dinucleotide pyrophosphates. In Escherichia coli O127:H6 (strain E2348/69 / EPEC), this protein is NAD-capped RNA hydrolase NudC.